The primary structure comprises 197 residues: MSLGRLCRLLKPALLCGALAAPGLAGTMCASQDDWRSARSMHEFSAKDIDGHTVNLDKYRGFVCIVTNVASQUGKTQVNYTQLVDLHARYAECGLRILAFPCNQFGKQEPGSNEEIKEFAAGYNVKFDMFSKICVNGDDAHPLWKWMKIQPKGKGTLGNAIKWNFTKFLVDKNGCVVKRYGPMEEPQVIEKDLPCYF.

A Phosphoserine modification is found at Ser40. Sec73 is a catalytic residue. Residue Sec73 is a non-standard amino acid, selenocysteine.

It belongs to the glutathione peroxidase family. In terms of assembly, monomer. Has a tendency to form higher mass oligomers. Interacts with FUNDC1; this interaction promotes GPX4 recruitment into mitochondria through TOM/TIM complex where it is degraded by mitophagy. Expressed in testis. Also expressed in liver, lung, kidney and spinal cord.

The protein resides in the mitochondrion. Its subcellular location is the cytoplasm. The enzyme catalyses a hydroperoxy polyunsaturated fatty acid + 2 glutathione = a hydroxy polyunsaturated fatty acid + glutathione disulfide + H2O. The catalysed reaction is 2 glutathione + H2O2 = glutathione disulfide + 2 H2O. It catalyses the reaction tert-butyl hydroperoxide + 2 glutathione = tert-butanol + glutathione disulfide + H2O. It carries out the reaction cumene hydroperoxide + 2 glutathione = 2-phenylpropan-2-ol + glutathione disulfide + H2O. The enzyme catalyses (9S)-hydroperoxy-(10E,12Z)-octadecadienoate + 2 glutathione = (9S)-hydroxy-(10E,12Z)-octadecadienoate + glutathione disulfide + H2O. The catalysed reaction is (13S)-hydroperoxy-(9Z,11E)-octadecadienoate + 2 glutathione = (13S)-hydroxy-(9Z,11E)-octadecadienoate + glutathione disulfide + H2O. It catalyses the reaction (5S)-hydroperoxy-(6E,8Z,11Z,14Z)-eicosatetraenoate + 2 glutathione = (5S)-hydroxy-(6E,8Z,11Z,14Z)-eicosatetraenoate + glutathione disulfide + H2O. It carries out the reaction (12R)-hydroperoxy-(5Z,8Z,10E,14Z)-eicosatetraenoate + 2 glutathione = (12R)-hydroxy-(5Z,8Z,10E,14Z)-eicosatetraenoate + glutathione disulfide + H2O. The enzyme catalyses (12S)-hydroperoxy-(5Z,8Z,10E,14Z)-eicosatetraenoate + 2 glutathione = (12S)-hydroxy-(5Z,8Z,10E,14Z)-eicosatetraenoate + glutathione disulfide + H2O. The catalysed reaction is (15S)-hydroperoxy-(5Z,8Z,11Z,13E)-eicosatetraenoate + 2 glutathione = (15S)-hydroxy-(5Z,8Z,11Z,13E)-eicosatetraenoate + glutathione disulfide + H2O. It catalyses the reaction (5S)-hydroperoxy-(6E,8Z,11Z,14Z,17Z)-eicosapentaenoate + 2 glutathione = (5S)-hydroxy-(6E,8Z,11Z,14Z,17Z)-eicosapentaenoate + glutathione disulfide + H2O. It carries out the reaction (12S)-hydroperoxy-(5Z,8Z,10E,14Z,17Z)-eicosapentaenoate + 2 glutathione = (12S)-hydroxy-(5Z,8Z,10E,14Z,17Z)-eicosapentaenoate + glutathione disulfide + H2O. The enzyme catalyses (15S)-hydroperoxy-(5Z,8Z,11Z,13E,17Z)-eicosapentaenoate + 2 glutathione = (15S)-hydroxy-(5Z,8Z,11Z,13E,17Z)-eicosapentaenoate + glutathione disulfide + H2O. The catalysed reaction is (15S)-hydroperoxy-(11Z,13E)-eicosadienoate + 2 glutathione = (15S)-hydroxy-(11Z,13E)-eicosadienoate + glutathione disulfide + H2O. It catalyses the reaction (17S)-hydroperoxy-(4Z,7Z,10Z,13Z,15E,19Z)-docosahexaenoate + 2 glutathione = (17S)-hydroxy-(4Z,7Z,10Z,13Z,15E,19Z)-docosahexaenoate + glutathione disulfide + H2O. It carries out the reaction a hydroperoxy-1,2-diacyl-glycero-3-phosphocholine + 2 glutathione = a hydroxy-1,2-diacyl-glycero-3-phosphocholine + glutathione disulfide + H2O. In terms of biological role, essential antioxidant peroxidase that directly reduces phospholipid hydroperoxide even if they are incorporated in membranes and lipoproteins. Can also reduce fatty acid hydroperoxide, cholesterol hydroperoxide and thymine hydroperoxide. Plays a key role in protecting cells from oxidative damage by preventing membrane lipid peroxidation. Required to prevent cells from ferroptosis, a non-apoptotic cell death resulting from an iron-dependent accumulation of lipid reactive oxygen species. The presence of selenocysteine (Sec) versus Cys at the active site is essential for life: it provides resistance to overoxidation and prevents cells against ferroptosis. The presence of Sec at the active site is also essential for the survival of a specific type of parvalbumin-positive interneurons, thereby preventing against fatal epileptic seizures. May be required to protect cells from the toxicity of ingested lipid hydroperoxides. Required for normal sperm development and male fertility. Essential for maturation and survival of photoreceptor cells. Plays a role in a primary T-cell response to viral and parasitic infection by protecting T-cells from ferroptosis and by supporting T-cell expansion. Plays a role of glutathione peroxidase in platelets in the arachidonic acid metabolism. Reduces hydroperoxy ester lipids formed by a 15-lipoxygenase that may play a role as down-regulator of the cellular 15-lipoxygenase pathway. Can also reduce small soluble hydroperoxides such as H2O2, cumene hydroperoxide and tert-butyl hydroperoxide. This Callithrix jacchus (White-tufted-ear marmoset) protein is Phospholipid hydroperoxide glutathione peroxidase.